Reading from the N-terminus, the 378-residue chain is Homoserine O-acetyltransferase (378 aa).

Residues 52-337 enclose the AB hydrolase-1 domain; it reads NAILICHALT…YSQHGHDTFL (286 aa). The active-site Nucleophile is serine 148. Position 217 (arginine 217) interacts with substrate. Active-site residues include aspartate 304 and histidine 333. Residue aspartate 334 participates in substrate binding.

This sequence belongs to the AB hydrolase superfamily. MetX family. As to quaternary structure, homodimer.

The protein resides in the cytoplasm. It catalyses the reaction L-homoserine + acetyl-CoA = O-acetyl-L-homoserine + CoA. Its pathway is amino-acid biosynthesis; L-methionine biosynthesis via de novo pathway; O-acetyl-L-homoserine from L-homoserine: step 1/1. Its function is as follows. Transfers an acetyl group from acetyl-CoA to L-homoserine, forming acetyl-L-homoserine. This is Homoserine O-acetyltransferase from Chloroherpeton thalassium (strain ATCC 35110 / GB-78).